The following is a 236-amino-acid chain: Peptidase E (236 aa).

Residues Ser122, Asp137, and His159 each act as charge relay system in the active site.

The protein belongs to the peptidase S51 family.

It is found in the cytoplasm. The catalysed reaction is Dipeptidase E catalyzes the hydrolysis of dipeptides Asp-|-Xaa. It does not act on peptides with N-terminal Glu, Asn or Gln, nor does it cleave isoaspartyl peptides.. Functionally, hydrolyzes dipeptides containing N-terminal aspartate residues. May play a role in allowing the cell to use peptide aspartate to spare carbon otherwise required for the synthesis of the aspartate family of amino acids. The chain is Peptidase E from Shewanella sp. (strain ANA-3).